The sequence spans 819 residues: Hypoxia-inducible factor 1-alpha (819 aa).

Residues 1-31 (MEGAAGGEEKKNRMSSERRKEKSRDAARSRR) form a disordered region. The interaction with TSGA10 stretch occupies residues 1–402 (MEGAAGGEEK…KEPDALTLLA (402 aa)). A compositionally biased stretch (basic and acidic residues) spans 7–31 (GEEKKNRMSSERRKEKSRDAARSRR). The region spanning 18–71 (RRKEKSRDAARSRRSKESEVFYELAHQLPLPHNVSSHLDKASVMRLTISYLRVR) is the bHLH domain. The interval 22–31 (KSRDAARSRR) is DNA-binding. A PAS 1 domain is found at 86–159 (KAQMNCFYLK…THRNGPIKKG (74 aa)). Residues 171–192 (RMKCTLTSRGRTMNIKSATWKV) form a required for heterodimer formation with ARNT region. The region spanning 229–299 (PHPSNIEIPL…KTHHDMFTKG (71 aa)) is the PAS 2 domain. Ser248 is subject to Phosphoserine; by CK1. The region spanning 303-346 (TGQYRMLAKRGGYVWVETQATVIYNTKNSQPQCIVCVNYVVSGI) is the PAC domain. Residues 402 to 599 (APAAGDTIIS…NPPSVSTAFQ (198 aa)) form an ODD region. Residue Pro403 is modified to 4-hydroxyproline. The segment covering 495-518 (IQDQPASPSDGSTRQSSPEPNSPS) has biased composition (polar residues). The tract at residues 495-521 (IQDQPASPSDGSTRQSSPEPNSPSEYC) is disordered. Residues 532 to 576 (FKLELVEKLFAEDTEAKNPFSTQDTDLDLEMLAPYIPMDDDFQLR) form an NTAD region. Lys533 is subject to N6-acetyllysine; alternate. A Glycyl lysine isopeptide (Lys-Gly) (interchain with G-Cter in ubiquitin); alternate cross-link involves residue Lys533. Residues Lys539 and Lys548 each participate in a glycyl lysine isopeptide (Lys-Gly) (interchain with G-Cter in ubiquitin) cross-link. Ser552 carries the post-translational modification Phosphoserine; by GSK3-beta. Thr556 is subject to Phosphothreonine; by GSK3-beta. Residue Pro565 is modified to 4-hydroxyproline. At Ser577 the chain carries Phosphoserine; by PLK3. Positions 577 to 778 (SFDQLSPLES…SDLACRLLGQ (202 aa)) are ID. The disordered stretch occupies residues 581 to 685 (LSPLESSSPN…SHPRSPNVLS (105 aa)). Low complexity predominate over residues 582-613 (SPLESSSPNPPSVSTAFQQTQLQEPTITTTTT). A compositionally biased stretch (basic and acidic residues) spans 614–628 (EELKTVTKDSTEDIK). The segment covering 632–655 (TSPSSTHTPKETTTATTSSPYSGT) has biased composition (low complexity). The residue at position 650 (Ser650) is a Phosphoserine; by PLK3. The residue at position 702 (Lys702) is an N6-acetyllysine. Residues 711 to 717 (RKRKMEH) carry the Nuclear localization signal motif. The CTAD stretch occupies residues 779–819 (SMDGSGLPQLTSYDCEVNAPIQGSRNLLQGEELLRALDQVN). Position 793 is an S-nitrosocysteine (Cys793). Residue Asn796 is modified to (3S)-3-hydroxyasparagine.

Interacts with the ARNT; forms a heterodimer that binds core DNA sequence 5'-TACGTG-3' within the hypoxia response element (HRE) of target gene promoters. Interacts with COPS5; the interaction increases the transcriptional activity of HIF1A through increased stability. Interacts with EP300 (via TAZ-type 1 domains); the interaction is stimulated in response to hypoxia and inhibited by CITED2. Interacts with CREBBP (via TAZ-type 1 domains). Interacts with NCOA1, NCOA2, APEX1 and HSP90. Interacts (hydroxylated within the ODD domain) with VHLL (via beta domain); the interaction, leads to polyubiquitination and subsequent HIF1A proteasomal degradation. During hypoxia, sumoylated HIF1A also binds VHL; the interaction promotes the ubiquitination of HIF1A. Interacts with SENP1; the interaction desumoylates HIF1A resulting in stabilization and activation of transcription. Interacts (via the ODD domain) with NAA10; the interaction appears not to acetylate HIF1A nor have any affect on protein stability, during hypoxia. Interacts with RWDD3; the interaction enhances HIF1A sumoylation. Interacts with TSGA10. Interacts with HIF3A. Interacts with RORA (via the DNA binding domain); the interaction enhances HIF1A transcription under hypoxia through increasing protein stability. Interaction with PSMA7 inhibits the transactivation activity of HIF1A under both normoxic and hypoxia-mimicking conditions. Interacts with USP20. Interacts with RACK1; promotes HIF1A ubiquitination and proteasome-mediated degradation. Interacts (via N-terminus) with USP19. Interacts with SIRT2. Interacts (deacetylated form) with EGLN1. Interacts with CBFA2T3. Interacts with HSP90AA1 and HSP90AB1. Interacts with DCUN1D1; this interaction increases the interaction between VHL and DCUN1D1. Interacts with HIF1AN. S-nitrosylation of Cys-793 may be responsible for increased recruitment of p300 coactivator necessary for transcriptional activity of HIF-1 complex. Post-translationally, acetylation of Lys-533 by ARD1 increases interaction with VHL and stimulates subsequent proteasomal degradation. Deacetylation of Lys-702 by SIRT2 increases its interaction with and hydroxylation by EGLN1 thereby inactivating HIF1A activity by inducing its proteasomal degradation. In terms of processing, requires phosphorylation for DNA-binding. Phosphorylation at Ser-248 by CSNK1D/CK1 represses kinase activity and impairs ARNT binding. Phosphorylation by GSK3-beta and PLK3 promote degradation by the proteasome. The iron and 2-oxoglutarate dependent 3-hydroxylation of asparagine is (S) stereospecific within HIF CTAD domains. Post-translationally, sumoylated; with SUMO1 under hypoxia. Sumoylation is enhanced through interaction with RWDD3. Both sumoylation and desumoylation seem to be involved in the regulation of its stability during hypoxia. Sumoylation can promote either its stabilization or its VHL-dependent degradation by promoting hydroxyproline-independent HIF1A-VHL complex binding, thus leading to HIF1A ubiquitination and proteasomal degradation. Desumoylation by SENP1 increases its stability amd transcriptional activity. There is a disaccord between various publications on the effect of sumoylation and desumoylation on its stability and transcriptional activity. In terms of processing, in normoxia, is hydroxylated on Pro-403 and Pro-565 in the oxygen-dependent degradation domain (ODD) by EGLN1/PHD2 and EGLN2/PHD1. EGLN3/PHD3 has also been shown to hydroxylate Pro-565. The hydroxylated prolines promote interaction with VHL, initiating rapid ubiquitination and subsequent proteasomal degradation. Deubiquitinated by USP20. Under hypoxia, proline hydroxylation is impaired and ubiquitination is attenuated, resulting in stabilization. In normoxia, is hydroxylated on Asn-796 by HIF1AN, thus abrogating interaction with CREBBP and EP300 and preventing transcriptional activation. Repressed by iron ion, via Fe(2+) prolyl hydroxylase (PHD) enzymes-mediated hydroxylation and subsequent proteasomal degradation.

Its subcellular location is the cytoplasm. The protein resides in the nucleus. It is found in the nucleus speckle. Induced by reactive oxygen species (ROS). Functionally, functions as a master transcriptional regulator of the adaptive response to hypoxia. Under hypoxic conditions, activates the transcription of over 40 genes, including erythropoietin, glucose transporters, glycolytic enzymes, vascular endothelial growth factor, HILPDA, and other genes whose protein products increase oxygen delivery or facilitate metabolic adaptation to hypoxia. Plays an essential role in embryonic vascularization, tumor angiogenesis and pathophysiology of ischemic disease. Heterodimerizes with ARNT; heterodimer binds to core DNA sequence 5'-TACGTG-3' within the hypoxia response element (HRE) of target gene promoters. Activation requires recruitment of transcriptional coactivators such as CREBBP and EP300. Activity is enhanced by interaction with NCOA1 and/or NCOA2. Interaction with redox regulatory protein APEX1 seems to activate CTAD and potentiates activation by NCOA1 and CREBBP. Involved in the axonal distribution and transport of mitochondria in neurons during hypoxia. This Eospalax fontanierii baileyi (Plateau zokor) protein is Hypoxia-inducible factor 1-alpha (HIF1A).